The chain runs to 217 residues: Thiamine-phosphate synthase (217 aa).

Residues 39–43 and N71 contribute to the 4-amino-2-methyl-5-(diphosphooxymethyl)pyrimidine site; that span reads QYRDK. 2 residues coordinate Mg(2+): D72 and D91. T110 is a 4-amino-2-methyl-5-(diphosphooxymethyl)pyrimidine binding site. A 2-[(2R,5Z)-2-carboxy-4-methylthiazol-5(2H)-ylidene]ethyl phosphate-binding site is contributed by 137–139; the sequence is SHT. Residue K140 participates in 4-amino-2-methyl-5-(diphosphooxymethyl)pyrimidine binding. A 2-[(2R,5Z)-2-carboxy-4-methylthiazol-5(2H)-ylidene]ethyl phosphate-binding site is contributed by G167.

The protein belongs to the thiamine-phosphate synthase family. Mg(2+) is required as a cofactor.

It catalyses the reaction 2-[(2R,5Z)-2-carboxy-4-methylthiazol-5(2H)-ylidene]ethyl phosphate + 4-amino-2-methyl-5-(diphosphooxymethyl)pyrimidine + 2 H(+) = thiamine phosphate + CO2 + diphosphate. It carries out the reaction 2-(2-carboxy-4-methylthiazol-5-yl)ethyl phosphate + 4-amino-2-methyl-5-(diphosphooxymethyl)pyrimidine + 2 H(+) = thiamine phosphate + CO2 + diphosphate. The enzyme catalyses 4-methyl-5-(2-phosphooxyethyl)-thiazole + 4-amino-2-methyl-5-(diphosphooxymethyl)pyrimidine + H(+) = thiamine phosphate + diphosphate. It functions in the pathway cofactor biosynthesis; thiamine diphosphate biosynthesis; thiamine phosphate from 4-amino-2-methyl-5-diphosphomethylpyrimidine and 4-methyl-5-(2-phosphoethyl)-thiazole: step 1/1. Its function is as follows. Condenses 4-methyl-5-(beta-hydroxyethyl)thiazole monophosphate (THZ-P) and 2-methyl-4-amino-5-hydroxymethyl pyrimidine pyrophosphate (HMP-PP) to form thiamine monophosphate (TMP). In Alcanivorax borkumensis (strain ATCC 700651 / DSM 11573 / NCIMB 13689 / SK2), this protein is Thiamine-phosphate synthase.